A 73-amino-acid polypeptide reads, in one-letter code: Large ribosomal subunit protein bL28 (73 aa).

This sequence belongs to the bacterial ribosomal protein bL28 family.

The chain is Large ribosomal subunit protein bL28 from Buchnera aphidicola subsp. Cinara cedri (strain Cc).